Here is a 399-residue protein sequence, read N- to C-terminus: Dual-specificity RNA methyltransferase RlmN (399 aa).

The active-site Proton acceptor is Glu120. The region spanning 126-367 (EEGRGTLCVS…SPVRTPRGRD (242 aa)) is the Radical SAM core domain. An intrachain disulfide couples Cys133 to Cys372. Residues Cys140, Cys144, and Cys147 each coordinate [4Fe-4S] cluster. Residues 198–199 (GE), Ser230, 252–254 (SLH), and Asn329 each bind S-adenosyl-L-methionine. Cys372 (S-methylcysteine intermediate) is an active-site residue.

Belongs to the radical SAM superfamily. RlmN family. [4Fe-4S] cluster serves as cofactor.

It is found in the cytoplasm. It carries out the reaction adenosine(2503) in 23S rRNA + 2 reduced [2Fe-2S]-[ferredoxin] + 2 S-adenosyl-L-methionine = 2-methyladenosine(2503) in 23S rRNA + 5'-deoxyadenosine + L-methionine + 2 oxidized [2Fe-2S]-[ferredoxin] + S-adenosyl-L-homocysteine. The catalysed reaction is adenosine(37) in tRNA + 2 reduced [2Fe-2S]-[ferredoxin] + 2 S-adenosyl-L-methionine = 2-methyladenosine(37) in tRNA + 5'-deoxyadenosine + L-methionine + 2 oxidized [2Fe-2S]-[ferredoxin] + S-adenosyl-L-homocysteine. In terms of biological role, specifically methylates position 2 of adenine 2503 in 23S rRNA and position 2 of adenine 37 in tRNAs. m2A2503 modification seems to play a crucial role in the proofreading step occurring at the peptidyl transferase center and thus would serve to optimize ribosomal fidelity. In Parvibaculum lavamentivorans (strain DS-1 / DSM 13023 / NCIMB 13966), this protein is Dual-specificity RNA methyltransferase RlmN.